A 281-amino-acid chain; its full sequence is Putative zinc-binding protein ORF11 (281 aa).

In Ictaluridae (bullhead catfishes), this protein is Putative zinc-binding protein ORF11 (ORF11).